The following is a 747-amino-acid chain: NAD-dependent protein deacetylase sirtuin-1 (747 aa).

Positions 1–135 (MADEAALALQ…DDEGEEEEEA (135 aa)) are disordered. Alanine 2 is subject to N-acetylalanine. The segment at 2 to 139 (ADEAALALQP…EEEEEAAAAA (138 aa)) is interaction with CLOCK. The interaction with H1-4 stretch occupies residues 2–268 (ADEAALALQP…LTGAGVSVSC (267 aa)). Phosphoserine occurs at positions 14 and 26. Phosphoserine; by MAPK8 is present on serine 27. The short motif at 32 to 39 (PLRKRPRR) is the Nuclear localization signal element. Residue serine 47 is modified to Phosphoserine; by MAPK8. The segment covering 61 to 100 (PAAARGCPGAAAAALWREAEAEAAAAGGEQEAQATAAAGE) has biased composition (low complexity). Residues 120–135 (LYDEDDDDEGEEEEEA) are compositionally biased toward acidic residues. A Nuclear export signal motif is present at residues 138–145 (AAIGYRDN). The interval 143-541 (RDNLLFGDEI…LHVSEDSSSP (399 aa)) is interaction with CCAR2. Serine 159, serine 162, serine 172, and serine 173 each carry phosphoserine. The short motif at 223-230 (IVINILSE) is the Nuclear localization signal element. A Deacetylase sirtuin-type domain is found at 236–496 (KRKDINTIED…NELCHRLGGE (261 aa)). Lysine 238 bears the N6-acetyllysine mark. The segment at 256–259 (IIVL) is required for interaction with the sumoylated form of CCAR2. NAD(+) is bound by residues 261–280 (GAGV…DGIY) and 345–348 (QNID). Histidine 363 acts as the Proton acceptor in catalysis. Zn(2+) is bound by residues cysteine 371 and cysteine 374. Lysine 377 bears the N6-acetyllysine mark. Residues cysteine 395 and cysteine 398 each contribute to the Zn(2+) site. 2 positions are modified to S-nitrosocysteine: cysteine 395 and cysteine 398. The short motif at 425 to 431 (AMKYDKD) is the Nuclear export signal element. Position 430 is an N6-acetyllysine (lysine 430). Residues 440–442 (GSS), 465–467 (NRE), and cysteine 482 each bind NAD(+). Lysine 513 carries the post-translational modification N6-acetyllysine. Disordered stretches follow at residues 523-549 (YLSE…PPDS) and 562-587 (SNDD…TSRN). The residue at position 530 (threonine 530) is a Phosphothreonine; by DYRK1A, DYRK3 and MAPK8. Serine 535 is modified (phosphoserine). The segment covering 537 to 549 (DSSSPERTSPPDS) has biased composition (polar residues). The phosphorylated at one of three serine residues stretch occupies residues 538 to 540 (SSS). Threonine 544 bears the Phosphothreonine mark. Position 545 is a phosphoserine (serine 545). Residues 569–580 (SESKGCMEEKPQ) are compositionally biased toward basic and acidic residues. N6-acetyllysine is present on lysine 610. Phosphoserine; by CaMK2 occurs at positions 659 and 661. Residues 663–726 (DDVLSSSSCG…FGTDGDDQEA (64 aa)) are disordered. The span at 666-677 (LSSSSCGSNSDS) shows a compositional bias: low complexity. The segment covering 687 to 707 (EPMEDESEIEEFYNGLEDEPD) has biased composition (acidic residues). Threonine 719 is modified (phosphothreonine). The residue at position 747 (serine 747) is a Phosphoserine.

The protein belongs to the sirtuin family. Class I subfamily. In terms of assembly, interacts with XBP1 isoform 2. Found in a complex with PCAF and MYOD1. Interacts with FOXO1; the interaction deacetylates FOXO1, resulting in its nuclear retention and promotion of its transcriptional activity Component of the eNoSC complex, composed of SIRT1, SUV39H1 and RRP8. Interacts with HES1, HEY2 and PML. Interacts with RPS19BP1/AROS. Interacts with CCAR2 (via N-terminus); the interaction disrupts the interaction between SIRT1 and p53/TP53. Interacts with SETD7; the interaction induces the dissociation of SIRT1 from p53/TP53 and increases p53/TP53 activity. Interacts with MYCN, NR1I2, CREBZF, TSC2, TLE1, FOS, JUN, NR0B2, PPARG, NCOR, IRS1, IRS2 and NMNAT1. Interacts with HNF1A; the interaction occurs under nutrient restriction. Interacts with SUZ12; the interaction mediates the association with the PRC4 histone methylation complex which is specific as an association with PCR2 and PCR3 complex variants is not found. Interacts with BCL6; leads to a epigenetic repression of specific target genes. Interacts with CLOCK, BMAL1 and PER2. Interacts with PPARA; the interaction seems to be modulated by NAD(+) levels. Interacts with NR1H3 and this interaction is inhibited in the presence of CCAR2. Interacts with CHEK2. Interacts with p53/TP53. Exhibits a preferential interaction with sumoylated CCAR2 over its unmodified form. Interacts with PACS2. Interacts with SIRT7. Interacts with PUS7. Interacts with TULP3. Interacts with MORN3; the interaction enhances the ubiquitination of p53/TP53. (Microbial infection) Interacts with HIV-1 Tat. Requires Zn(2+) as cofactor. Methylated on multiple lysine residues; methylation is enhanced after DNA damage and is dispensable for deacetylase activity toward p53/TP53. In terms of processing, phosphorylated. Phosphorylated by STK4/MST1, resulting in inhibition of SIRT1-mediated p53/TP53 deacetylation. Phosphorylation by MAPK8/JNK1 at Ser-27, Ser-47, and Thr-530 leads to increased nuclear localization and enzymatic activity. Phosphorylation at Thr-530 by DYRK1A and DYRK3 activates deacetylase activity and promotes cell survival. Phosphorylation by mammalian target of rapamycin complex 1 (mTORC1) at Ser-47 inhibits deacetylation activity. Phosphorylated by CaMK2, leading to increased p53/TP53 and NF-kappa-B p65/RELA deacetylation activity. Phosphorylation at Ser-27 implicating MAPK9 is linked to protein stability. There is some ambiguity for some phosphosites: Ser-159/Ser-162 and Thr-544/Ser-545. Post-translationally, proteolytically cleaved by cathepsin B upon TNF-alpha treatment to yield catalytic inactive but stable SirtT1 75 kDa fragment (75SirT1). S-nitrosylated by GAPDH, leading to inhibit the NAD-dependent protein deacetylase activity. In terms of processing, acetylated at various Lys residues. Deacetylated via an autocatalytic mechanism. Autodeacetylation at Lys-238 promotes its protein deacetylase activity. Post-translationally, ubiquitinated; leading to degradation. Deubiquitinated by USP22; leading to stabilization. In terms of tissue distribution, widely expressed.

Its subcellular location is the nucleus. The protein localises to the PML body. The protein resides in the cytoplasm. It localises to the mitochondrion. It catalyses the reaction N(6)-acetyl-L-lysyl-[protein] + NAD(+) + H2O = 2''-O-acetyl-ADP-D-ribose + nicotinamide + L-lysyl-[protein]. It carries out the reaction N(6)-propanoyl-L-lysyl-[protein] + NAD(+) + H2O = 3''-O-propanoyl-ADP-D-ribose + nicotinamide + L-lysyl-[protein]. The catalysed reaction is N(6)-(2E)-butenoyl-L-lysyl-[protein] + NAD(+) + H2O = 2''-O-(2E)-but-2-enoyl-ADP-D-ribose + nicotinamide + L-lysyl-[protein]. The enzyme catalyses N(6)-[(S)-lactoyl]-L-lysyl-[protein] + NAD(+) + H2O = 2''-O-(S)-lactoyl-ADP-D-ribose + nicotinamide + L-lysyl-[protein]. Inhibited by nicotinamide. Activated by resveratrol (3,5,4'-trihydroxy-trans-stilbene), butein (3,4,2',4'-tetrahydroxychalcone), piceatannol (3,5,3',4'-tetrahydroxy-trans-stilbene), Isoliquiritigenin (4,2',4'-trihydroxychalcone), fisetin (3,7,3',4'-tetrahydroxyflavone) and quercetin (3,5,7,3',4'-pentahydroxyflavone). MAPK8/JNK1 and RPS19BP1/AROS act as positive regulators of deacetylation activity. Negatively regulated by CCAR2. Its function is as follows. NAD-dependent protein deacetylase that links transcriptional regulation directly to intracellular energetics and participates in the coordination of several separated cellular functions such as cell cycle, response to DNA damage, metabolism, apoptosis and autophagy. Can modulate chromatin function through deacetylation of histones and can promote alterations in the methylation of histones and DNA, leading to transcriptional repression. Deacetylates a broad range of transcription factors and coregulators, thereby regulating target gene expression positively and negatively. Serves as a sensor of the cytosolic ratio of NAD(+)/NADH which is altered by glucose deprivation and metabolic changes associated with caloric restriction. Is essential in skeletal muscle cell differentiation and in response to low nutrients mediates the inhibitory effect on skeletal myoblast differentiation which also involves 5'-AMP-activated protein kinase (AMPK) and nicotinamide phosphoribosyltransferase (NAMPT). Component of the eNoSC (energy-dependent nucleolar silencing) complex, a complex that mediates silencing of rDNA in response to intracellular energy status and acts by recruiting histone-modifying enzymes. The eNoSC complex is able to sense the energy status of cell: upon glucose starvation, elevation of NAD(+)/NADP(+) ratio activates SIRT1, leading to histone H3 deacetylation followed by dimethylation of H3 at 'Lys-9' (H3K9me2) by SUV39H1 and the formation of silent chromatin in the rDNA locus. Deacetylates 'Lys-266' of SUV39H1, leading to its activation. Inhibits skeletal muscle differentiation by deacetylating PCAF and MYOD1. Deacetylates H2A and 'Lys-26' of H1-4. Deacetylates 'Lys-16' of histone H4 (in vitro). Involved in NR0B2/SHP corepression function through chromatin remodeling: Recruited to LRH1 target gene promoters by NR0B2/SHP thereby stimulating histone H3 and H4 deacetylation leading to transcriptional repression. Proposed to contribute to genomic integrity via positive regulation of telomere length; however, reports on localization to pericentromeric heterochromatin are conflicting. Proposed to play a role in constitutive heterochromatin (CH) formation and/or maintenance through regulation of the available pool of nuclear SUV39H1. Upon oxidative/metabolic stress decreases SUV39H1 degradation by inhibiting SUV39H1 polyubiquitination by MDM2. This increase in SUV39H1 levels enhances SUV39H1 turnover in CH, which in turn seems to accelerate renewal of the heterochromatin which correlates with greater genomic integrity during stress response. Deacetylates 'Lys-382' of p53/TP53 and impairs its ability to induce transcription-dependent proapoptotic program and modulate cell senescence. Deacetylates TAF1B and thereby represses rDNA transcription by the RNA polymerase I. Deacetylates MYC, promotes the association of MYC with MAX and decreases MYC stability leading to compromised transformational capability. Deacetylates FOXO3 in response to oxidative stress thereby increasing its ability to induce cell cycle arrest and resistance to oxidative stress but inhibiting FOXO3-mediated induction of apoptosis transcriptional activity; also leading to FOXO3 ubiquitination and protesomal degradation. Appears to have a similar effect on MLLT7/FOXO4 in regulation of transcriptional activity and apoptosis. Deacetylates DNMT1; thereby impairs DNMT1 methyltransferase-independent transcription repressor activity, modulates DNMT1 cell cycle regulatory function and DNMT1-mediated gene silencing. Deacetylates RELA/NF-kappa-B p65 thereby inhibiting its transactivating potential and augments apoptosis in response to TNF-alpha. Deacetylates HIF1A, KAT5/TIP60, RB1 and HIC1. Deacetylates FOXO1 resulting in its nuclear retention and enhancement of its transcriptional activity leading to increased gluconeogenesis in liver. Inhibits E2F1 transcriptional activity and apoptotic function, possibly by deacetylation. Involved in HES1- and HEY2-mediated transcriptional repression. In cooperation with MYCN seems to be involved in transcriptional repression of DUSP6/MAPK3 leading to MYCN stabilization by phosphorylation at 'Ser-62'. Deacetylates MEF2D. Required for antagonist-mediated transcription suppression of AR-dependent genes which may be linked to local deacetylation of histone H3. Represses HNF1A-mediated transcription. Required for the repression of ESRRG by CREBZF. Deacetylates NR1H3 and NR1H2 and deacetylation of NR1H3 at 'Lys-434' positively regulates transcription of NR1H3:RXR target genes, promotes NR1H3 proteasomal degradation and results in cholesterol efflux; a promoter clearing mechanism after reach round of transcription is proposed. Involved in lipid metabolism: deacetylates LPIN1, thereby inhibiting diacylglycerol synthesis. Implicated in regulation of adipogenesis and fat mobilization in white adipocytes by repression of PPARG which probably involves association with NCOR1 and SMRT/NCOR2. Deacetylates p300/EP300 and PRMT1. Deacetylates ACSS2 leading to its activation, and HMGCS1 deacetylation. Involved in liver and muscle metabolism. Through deacetylation and activation of PPARGC1A is required to activate fatty acid oxidation in skeletal muscle under low-glucose conditions and is involved in glucose homeostasis. Involved in regulation of PPARA and fatty acid beta-oxidation in liver. Involved in positive regulation of insulin secretion in pancreatic beta cells in response to glucose; the function seems to imply transcriptional repression of UCP2. Proposed to deacetylate IRS2 thereby facilitating its insulin-induced tyrosine phosphorylation. Deacetylates SREBF1 isoform SREBP-1C thereby decreasing its stability and transactivation in lipogenic gene expression. Involved in DNA damage response by repressing genes which are involved in DNA repair, such as XPC and TP73, deacetylating XRCC6/Ku70, and facilitating recruitment of additional factors to sites of damaged DNA, such as SIRT1-deacetylated NBN can recruit ATM to initiate DNA repair and SIRT1-deacetylated XPA interacts with RPA2. Also involved in DNA repair of DNA double-strand breaks by homologous recombination and specifically single-strand annealing independently of XRCC6/Ku70 and NBN. Promotes DNA double-strand breaks by mediating deacetylation of SIRT6. Transcriptional suppression of XPC probably involves an E2F4:RBL2 suppressor complex and protein kinase B (AKT) signaling. Transcriptional suppression of TP73 probably involves E2F4 and PCAF. Deacetylates WRN thereby regulating its helicase and exonuclease activities and regulates WRN nuclear translocation in response to DNA damage. Deacetylates APEX1 at 'Lys-6' and 'Lys-7' and stimulates cellular AP endonuclease activity by promoting the association of APEX1 to XRCC1. Catalyzes deacetylation of ERCC4/XPF, thereby impairing interaction with ERCC1 and nucleotide excision repair (NER). Increases p53/TP53-mediated transcription-independent apoptosis by blocking nuclear translocation of cytoplasmic p53/TP53 and probably redirecting it to mitochondria. Deacetylates XRCC6/Ku70 at 'Lys-539' and 'Lys-542' causing it to sequester BAX away from mitochondria thereby inhibiting stress-induced apoptosis. Is involved in autophagy, presumably by deacetylating ATG5, ATG7 and MAP1LC3B/ATG8. Deacetylates AKT1 which leads to enhanced binding of AKT1 and PDK1 to PIP3 and promotes their activation. Proposed to play role in regulation of STK11/LBK1-dependent AMPK signaling pathways implicated in cellular senescence which seems to involve the regulation of the acetylation status of STK11/LBK1. Can deacetylate STK11/LBK1 and thereby increase its activity, cytoplasmic localization and association with STRAD; however, the relevance of such activity in normal cells is unclear. In endothelial cells is shown to inhibit STK11/LBK1 activity and to promote its degradation. Deacetylates SMAD7 at 'Lys-64' and 'Lys-70' thereby promoting its degradation. Deacetylates CIITA and augments its MHC class II transactivation and contributes to its stability. Deacetylates MECOM/EVI1. Deacetylates PML at 'Lys-487' and this deacetylation promotes PML control of PER2 nuclear localization. During the neurogenic transition, represses selective NOTCH1-target genes through histone deacetylation in a BCL6-dependent manner and leading to neuronal differentiation. Regulates the circadian expression of several core clock genes, including BMAL1, RORC, PER2 and CRY1 and plays a critical role in maintaining a controlled rhythmicity in histone acetylation, thereby contributing to circadian chromatin remodeling. Deacetylates BMAL1 and histones at the circadian gene promoters in order to facilitate repression by inhibitory components of the circadian oscillator. Deacetylates PER2, facilitating its ubiquitination and degradation by the proteasome. Protects cardiomyocytes against palmitate-induced apoptosis. Deacetylates XBP1 isoform 2; deacetylation decreases protein stability of XBP1 isoform 2 and inhibits its transcriptional activity. Deacetylates PCK1 and directs its activity toward phosphoenolpyruvate production promoting gluconeogenesis. Involved in the CCAR2-mediated regulation of PCK1 and NR1D1. Deacetylates CTNB1 at 'Lys-49'. In POMC (pro-opiomelanocortin) neurons, required for leptin-induced activation of PI3K signaling. Deacetylates SOX9; promoting SOX9 nuclear localization and transactivation activity. Involved in the regulation of centrosome duplication: deacetylates CENATAC in G1 phase, allowing for SASS6 accumulation on the centrosome and subsequent procentriole assembly. Deacetylates NDC80/HEC1. In addition to protein deacetylase activity, also acts as a protein-lysine deacylase by mediating protein delactylation, depropionylation and decrotonylation. Mediates depropionylation of Osterix (SP7). Catalyzes decrotonylation of histones; it however does not represent a major histone decrotonylase. Mediates protein delactylation of TEAD1 and YAP1. In terms of biological role, deacetylates 'Lys-382' of p53/TP53, however with lower activity than isoform 1. In combination, the two isoforms exert an additive effect. Isoform 2 regulates p53/TP53 expression and cellular stress response and is in turn repressed by p53/TP53 presenting a SIRT1 isoform-dependent auto-regulatory loop. Catalytically inactive 75SirT1 may be involved in regulation of apoptosis. May be involved in protecting chondrocytes from apoptotic death by associating with cytochrome C and interfering with apoptosome assembly. Functionally, (Microbial infection) In case of HIV-1 infection, interacts with and deacetylates the viral Tat protein. The viral Tat protein inhibits SIRT1 deacetylation activity toward RELA/NF-kappa-B p65, thereby potentiates its transcriptional activity and SIRT1 is proposed to contribute to T-cell hyperactivation during infection. In Homo sapiens (Human), this protein is NAD-dependent protein deacetylase sirtuin-1.